The primary structure comprises 504 residues: 2-isopropylmalate synthase (504 aa).

The Pyruvate carboxyltransferase domain maps to 6-267; sequence IIVFDTTLRD…YTDINFKEIY (262 aa). The Mn(2+) site is built by Asp15, His201, His203, and Asn237. Residues 391-504 are regulatory domain; it reads EIIALSSSEC…ALNSYISMKQ (114 aa).

Belongs to the alpha-IPM synthase/homocitrate synthase family. LeuA type 1 subfamily. As to quaternary structure, homodimer. The cofactor is Mn(2+).

Its subcellular location is the cytoplasm. The enzyme catalyses 3-methyl-2-oxobutanoate + acetyl-CoA + H2O = (2S)-2-isopropylmalate + CoA + H(+). It participates in amino-acid biosynthesis; L-leucine biosynthesis; L-leucine from 3-methyl-2-oxobutanoate: step 1/4. Catalyzes the condensation of the acetyl group of acetyl-CoA with 3-methyl-2-oxobutanoate (2-ketoisovalerate) to form 3-carboxy-3-hydroxy-4-methylpentanoate (2-isopropylmalate). The chain is 2-isopropylmalate synthase from Campylobacter hominis (strain ATCC BAA-381 / DSM 21671 / CCUG 45161 / LMG 19568 / NCTC 13146 / CH001A).